The following is a 303-amino-acid chain: Inner kinetochore subunit mal2 (303 aa).

Belongs to the CENP-O/MCM21 family. In terms of assembly, component of the heterotetrameric kinetochore subcomplex COMA, which consists of fta2, fta7, mal2 and mis17. The COMA subcomplex is part of a larger constitutive centromere-associated network (CCAN) (also known as central kinetochore Sim4 complex in fission yeast), which is composed of at least cnl2, cnp3, cnp20, fta1, fta2, fta3, fta4, fta6, fta7, mal2, mhf1, mhf2, mis6, mis15, mis17, sim4 and wip1.

The protein localises to the nucleus. The protein resides in the chromosome. It localises to the centromere. It is found in the kinetochore. Functionally, component of the kinetochore, a multiprotein complex that assembles on centromeric DNA and attaches chromosomes to spindle microtubules, mediating chromosome segregation and sister chromatid segregation during meiosis and mitosis. Component of the inner kinetochore COMA complex, which connects centromere-associated proteins and the outer kinetochore. COMA interacts with other inner kinetochore proteins to form the inner kinetochore constitutive centromere-associated network (CCAN), which serves as a structural platform for outer kinetochore assembly. The sequence is that of Inner kinetochore subunit mal2 (mal2) from Schizosaccharomyces pombe (strain 972 / ATCC 24843) (Fission yeast).